The primary structure comprises 617 residues: tRNA uridine 5-carboxymethylaminomethyl modification enzyme MnmG (617 aa).

FAD is bound by residues 9–14 (GAGHAG), Val121, and Thr176. Position 269 to 283 (269 to 283 (GPRYCPSIEDKFVRF)) interacts with NAD(+). Gln366 is a binding site for FAD.

This sequence belongs to the MnmG family. As to quaternary structure, homodimer. Heterotetramer of two MnmE and two MnmG subunits. It depends on FAD as a cofactor.

Its subcellular location is the cytoplasm. Its function is as follows. NAD-binding protein involved in the addition of a carboxymethylaminomethyl (cmnm) group at the wobble position (U34) of certain tRNAs, forming tRNA-cmnm(5)s(2)U34. This Acholeplasma laidlawii (strain PG-8A) protein is tRNA uridine 5-carboxymethylaminomethyl modification enzyme MnmG.